A 421-amino-acid chain; its full sequence is Imidazolonepropionase (421 aa).

Fe(3+) contacts are provided by H81 and H83. Zn(2+) is bound by residues H81 and H83. Residues R90, Y153, and H186 each coordinate 4-imidazolone-5-propanoate. Y153 is a binding site for N-formimidoyl-L-glutamate. H251 serves as a coordination point for Fe(3+). H251 serves as a coordination point for Zn(2+). 4-imidazolone-5-propanoate is bound at residue E254. A Fe(3+)-binding site is contributed by D326. Zn(2+) is bound at residue D326. N328 and G330 together coordinate N-formimidoyl-L-glutamate. 4-imidazolone-5-propanoate is bound at residue S331.

Belongs to the metallo-dependent hydrolases superfamily. HutI family. Requires Zn(2+) as cofactor. Fe(3+) serves as cofactor.

It localises to the cytoplasm. The enzyme catalyses 4-imidazolone-5-propanoate + H2O = N-formimidoyl-L-glutamate. Its pathway is amino-acid degradation; L-histidine degradation into L-glutamate; N-formimidoyl-L-glutamate from L-histidine: step 3/3. Its function is as follows. Catalyzes the hydrolytic cleavage of the carbon-nitrogen bond in imidazolone-5-propanoate to yield N-formimidoyl-L-glutamate. It is the third step in the universal histidine degradation pathway. The polypeptide is Imidazolonepropionase (Streptococcus pyogenes serotype M6 (strain ATCC BAA-946 / MGAS10394)).